The chain runs to 921 residues: Valine--tRNA ligase (921 aa).

The 'HIGH' region motif lies at 40–50; the sequence is PNVTGSLHMGH. A 'KMSKS' region motif is present at residues 522–526; sequence KMSKS. Lys-525 contributes to the ATP binding site. A coiled-coil region spans residues 849 to 921; the sequence is MADLIDKEAE…LQHKNRIESL (73 aa).

This sequence belongs to the class-I aminoacyl-tRNA synthetase family. ValS type 1 subfamily. In terms of assembly, monomer.

The protein resides in the cytoplasm. The catalysed reaction is tRNA(Val) + L-valine + ATP = L-valyl-tRNA(Val) + AMP + diphosphate. In terms of biological role, catalyzes the attachment of valine to tRNA(Val). As ValRS can inadvertently accommodate and process structurally similar amino acids such as threonine, to avoid such errors, it has a 'posttransfer' editing activity that hydrolyzes mischarged Thr-tRNA(Val) in a tRNA-dependent manner. In Legionella pneumophila (strain Paris), this protein is Valine--tRNA ligase.